A 119-amino-acid polypeptide reads, in one-letter code: Protein yippee-like 3 (119 aa).

The 98-residue stretch at 19–116 (RRYSCAHCRA…IELNHMIKDN (98 aa)) folds into the Yippee domain. Positions 23, 26, 79, and 82 each coordinate Zn(2+).

This sequence belongs to the yippee family. In terms of processing, probably ubiquitinated leading to its degradation by the proteasome.

Its subcellular location is the nucleus. It localises to the nucleolus. Its function is as follows. Involved in proliferation and apoptosis in myeloid precursor cells. The protein is Protein yippee-like 3 (YPEL3) of Bos taurus (Bovine).